Consider the following 553-residue polypeptide: Nucleoside-diphosphatase mig-23 (553 aa).

The Cytoplasmic segment spans residues 1-8; that stretch reads MRVSRRFT. Residues 9 to 29 form a helical membrane-spanning segment; the sequence is ILAITAMIFLSLIICIYAVAA. Over 30–489 the chain is Lumenal; it reads HTTVNVILQK…IVKETHSASE (460 aa). Glu174 acts as the Proton acceptor in catalysis. 2 N-linked (GlcNAc...) asparagine glycosylation sites follow: Asn190 and Asn284. The chain crosses the membrane as a helical span at residues 490–510; that stretch reads SLWAPLFFLSAVFCLFVLVCA. Residues 511-553 lie on the Cytoplasmic side of the membrane; it reads KEHSLLCFDDKRRASFGLTRRQYSYKMLKEDRTSSSAFLENFA.

The protein belongs to the GDA1/CD39 NTPase family.

It is found in the golgi apparatus membrane. The catalysed reaction is a ribonucleoside 5'-diphosphate + H2O = a ribonucleoside 5'-phosphate + phosphate + H(+). Its function is as follows. Seems to be able to hydrolyze ADP, UDP and GDP. Supports mig-17 glycosylation and surface expression, which is required for proper migration of distal tip cells during gonad morphogenesis. This Caenorhabditis briggsae protein is Nucleoside-diphosphatase mig-23.